A 533-amino-acid polypeptide reads, in one-letter code: Cytochrome P450 monooxygenase calL (533 aa).

The chain crosses the membrane as a helical span at residues 8 to 28 (TQLALLVWGIAVCVTLAIVVP). N-linked (GlcNAc...) asparagine glycosylation is present at Asn33. The tract at residues 123–148 (GKFKQDQSGRSKNPVPGHDVKPGQPR) is disordered. Asn388 carries N-linked (GlcNAc...) asparagine glycosylation. Residue Cys467 participates in heme binding.

The protein belongs to the cytochrome P450 family. It depends on heme as a cofactor.

It localises to the membrane. It participates in secondary metabolite biosynthesis. In terms of biological role, cytochrome P450 monooxygenase; part of the gene cluster that mediates the biosynthesis of calbistrin A and related compounds. Calbistrin A is a secondary metabolite with an interesting structure that was recently found to have bioactivity against leukemia cells. It consists of two polyketides linked by an ester bond: a bicyclic decalin containing polyketide and a linear 12 carbon dioic acid structure. The polyketide synthase calA is probably responsible for forming the decalin moiety. Because calA lacks a designated enoylreductase (ER) domain, the required activity is provided by the trans-enoyl reductase calK. Following release from the PKS, calF then probably catalyzes the oxidation and the subsequent Diels Alder cycloisomerization that lead to the formation of the decalin moiety. The decalin polyketide backbone includes two C-methyl groups, at C7 and C11 in backbone, of which the C7 position is probably methylated by the methyltransferase domain of calA. A candidate for adding the methyl group at C11, if not done by CalA, is the cluster methyltransferase calH. Several additional tailoring enzymes within the cluster could be involved in the modification of the decalin polyketide product. Those include the 3 cytochrome P450 monooxygenases CalE, CalG and CalL, of which one might be responsible for the introduction of the extra hydroxyl group attached to the backbone of the decalin moiety, at position C9 in the backbone, that allows for attachment of the linear moiety. One tailoring enzyme activity that is expected to be involved in biosynthesis of calbistrin is an acyltransferase for connecting the two polyketide synthase products, and which could be performed by the cluster acyltransferase calJ. The enzyme responsible for the biosynthesis of the linear moiety, probably a second PKS, has not been identified yet. The chain is Cytochrome P450 monooxygenase calL from Penicillium decumbens.